The following is a 139-amino-acid chain: Lysozyme (139 aa).

The N-terminal stretch at 1–19 (MTKYVILLAVLAFALHCDA) is a signal peptide. The 120-residue stretch at 20-139 (KRFTRCGLVQ…QHGLPDISDC (120 aa)) folds into the C-type lysozyme domain. Intrachain disulfides connect cysteine 25-cysteine 139, cysteine 46-cysteine 129, cysteine 81-cysteine 95, and cysteine 91-cysteine 109. Catalysis depends on residues glutamate 51 and aspartate 69.

Belongs to the glycosyl hydrolase 22 family.

It carries out the reaction Hydrolysis of (1-&gt;4)-beta-linkages between N-acetylmuramic acid and N-acetyl-D-glucosamine residues in a peptidoglycan and between N-acetyl-D-glucosamine residues in chitodextrins.. Functionally, lysozymes have primarily a bacteriolytic function; those in tissues and body fluids are associated with the monocyte-macrophage system and enhance the activity of immunoagents. The sequence is that of Lysozyme from Hyalophora cecropia (Cecropia moth).